A 282-amino-acid polypeptide reads, in one-letter code: Shikimate dehydrogenase (NADP(+)) (282 aa).

Shikimate contacts are provided by residues 15–17 (SKS) and threonine 62. Lysine 66 (proton acceptor) is an active-site residue. Asparagine 87 and aspartate 103 together coordinate shikimate. Residues 127–131 (GAGGA), 151–156 (NRTHTK), and methionine 220 contribute to the NADP(+) site. Tyrosine 222 contacts shikimate. Glycine 244 serves as a coordination point for NADP(+).

Belongs to the shikimate dehydrogenase family. In terms of assembly, homodimer.

It catalyses the reaction shikimate + NADP(+) = 3-dehydroshikimate + NADPH + H(+). It participates in metabolic intermediate biosynthesis; chorismate biosynthesis; chorismate from D-erythrose 4-phosphate and phosphoenolpyruvate: step 4/7. Involved in the biosynthesis of the chorismate, which leads to the biosynthesis of aromatic amino acids. Catalyzes the reversible NADPH linked reduction of 3-dehydroshikimate (DHSA) to yield shikimate (SA). The sequence is that of Shikimate dehydrogenase (NADP(+)) from Shewanella baltica (strain OS155 / ATCC BAA-1091).